The sequence spans 425 residues: Serine--tRNA ligase (425 aa).

L-serine is bound at residue 233-235 (TAE). Residue 264-266 (RRE) participates in ATP binding. Glutamate 287 lines the L-serine pocket. Position 351–354 (351–354 (EISS)) interacts with ATP. An L-serine-binding site is contributed by serine 385.

The protein belongs to the class-II aminoacyl-tRNA synthetase family. Type-1 seryl-tRNA synthetase subfamily. As to quaternary structure, homodimer. The tRNA molecule binds across the dimer.

It is found in the cytoplasm. It catalyses the reaction tRNA(Ser) + L-serine + ATP = L-seryl-tRNA(Ser) + AMP + diphosphate + H(+). It carries out the reaction tRNA(Sec) + L-serine + ATP = L-seryl-tRNA(Sec) + AMP + diphosphate + H(+). It functions in the pathway aminoacyl-tRNA biosynthesis; selenocysteinyl-tRNA(Sec) biosynthesis; L-seryl-tRNA(Sec) from L-serine and tRNA(Sec): step 1/1. Functionally, catalyzes the attachment of serine to tRNA(Ser). Is also able to aminoacylate tRNA(Sec) with serine, to form the misacylated tRNA L-seryl-tRNA(Sec), which will be further converted into selenocysteinyl-tRNA(Sec). This is Serine--tRNA ligase from Synechococcus sp. (strain CC9902).